Consider the following 81-residue polypeptide: uncharacterized protein (81 aa).

This is an uncharacterized protein from Schizosaccharomyces pombe (strain 972 / ATCC 24843) (Fission yeast).